The following is a 149-amino-acid chain: Nucleoside diphosphate kinase (149 aa).

Residues K9, F57, R85, T91, R102, and N112 each contribute to the ATP site. Catalysis depends on H115, which acts as the Pros-phosphohistidine intermediate.

This sequence belongs to the NDK family. Mg(2+) serves as cofactor.

The protein localises to the cytoplasm. The enzyme catalyses a 2'-deoxyribonucleoside 5'-diphosphate + ATP = a 2'-deoxyribonucleoside 5'-triphosphate + ADP. The catalysed reaction is a ribonucleoside 5'-diphosphate + ATP = a ribonucleoside 5'-triphosphate + ADP. In terms of biological role, major role in the synthesis of nucleoside triphosphates other than ATP. The ATP gamma phosphate is transferred to the NDP beta phosphate via a ping-pong mechanism, using a phosphorylated active-site intermediate. This chain is Nucleoside diphosphate kinase, found in Methanosarcina mazei (strain ATCC BAA-159 / DSM 3647 / Goe1 / Go1 / JCM 11833 / OCM 88) (Methanosarcina frisia).